The following is a 161-amino-acid chain: Phosphopantetheine adenylyltransferase (161 aa).

S10 contributes to the substrate binding site. Residues S10–F11 and H18 contribute to the ATP site. 3 residues coordinate substrate: K42, A75, and R89. Residues G90–R92, E100, and L125–S131 each bind ATP.

Belongs to the bacterial CoaD family. In terms of assembly, homohexamer. Mg(2+) is required as a cofactor.

The protein resides in the cytoplasm. The enzyme catalyses (R)-4'-phosphopantetheine + ATP + H(+) = 3'-dephospho-CoA + diphosphate. It functions in the pathway cofactor biosynthesis; coenzyme A biosynthesis; CoA from (R)-pantothenate: step 4/5. Reversibly transfers an adenylyl group from ATP to 4'-phosphopantetheine, yielding dephospho-CoA (dPCoA) and pyrophosphate. This chain is Phosphopantetheine adenylyltransferase, found in Streptococcus agalactiae serotype Ia (strain ATCC 27591 / A909 / CDC SS700).